The following is a 556-amino-acid chain: Sphingomyelinase C (556 aa).

Residues 1–27 form the signal peptide; that stretch reads MRIKKYTKVRLLVNCCLLLFFLIDCGA.

It localises to the secreted. It catalyses the reaction a sphingomyelin + H2O = phosphocholine + an N-acylsphing-4-enine + H(+). This is Sphingomyelinase C (sph) from Leptospira interrogans.